A 1351-amino-acid polypeptide reads, in one-letter code: MFLIIFILPTTLAVIGDFNCTNSFINDYNKTIPRISEDVVDVSLGLGTYYVLNRVYLNTTLLFTGYFPKSGANFRDLALKGSKYLSTLWYKPPFLSDFNNGIFSKVKNTKLYVNNTLYSEFSTIVIGSVFVNTSYTIVVQPHNGILEITACQYTMCEYPHTVCKSKGSIRNESWHIDSSEPLCLFKKNFTYNVSADWLYFHFYQERGVFYAYYADVGMPTTFLFSLYLGTILSHYYVMPLTCKAISSNTDNETLEYWVTPLSRRQYLLNFDEHGVITNAVDCSSSFLSEIQCKTQSFAPNTGVYDLSGFTVKPVATVYRRIPNLPDCDIDNWLNNVSVPSPLNWERRIFSNCNFNLSTLLRLVHVDSFSCNNLDKSKIFGSCFNSITVDKFAIPNRRRDDLQLGSSGFLQSSNYKIDISSSSCQLYYSLPLVNVTINNFNPSSWNRRYGFGSFNVSSYDVVYSDHCFSVNSDFCPCADPSVVNSCVKSKPLSAICPAGTKYRHCDLDTTLYVNNWCRCSCLPDPISTYSPNTCPQKKVVVGIGEHCPGLGINEEKCGTQLNHSSCSCSPDAFLGWSFDSCISNNRCNIFSNFIFNGINSGTTCSNDLLYSNTEVSTGVCVNYDLYGITGQGIFKEVSAAYYNNWQNLLYDSNGNIIGFKDFLTNKTYTILPCYSGRVSAAFYQNSSSPALLYRNLKCSYVLNNISFISQPFYFDSYLGCVLNAVNLTSYSVSSCDLRMGSGFCIDYALPSSRRKRRGISSPYRFVTFEPFNVSFVNDSVETVGGLFEIQIPTNFTIAGHEEFIQTSSPKVTIDCSAFVCSNYAACHDLLSEYGTFCDNINSILNEVNDLLDITQLQVANALMQGVTLSSNLNTNLHSDVDNIDFKSLLGCLGSQCGSSSRSLLEDLLFNKVKLSDVGFVEAYNNCTGGSEIRDLLCVQSFNGIKVLPPILSETQISGYTTAATVAAMFPPWSAAAGVPFSLNVQYRINGLGVTMDVLNKNQKLIANAFNKALLSIQNGFTATNSALAKIQSVVNANAQALNSLLQQLFNKFGAISSSLQEILSRLDNLEAQVQIDRLINGRLTALNAYVSQQLSDITLIKAGASRAIEKVNECVKSQSPRINFCGNGNHILSLVQNAPYGLLFIHFSYKPTSFKTVLVSPGLCLSGDRGIAPKQGYFIKQNDSWMFTGSSYYYPEPISDKNVVFMNSCSVNFTKAPFIYLNNSIPNLSDFEAEFSLWFKNHTSIAPNLTFNSHINATFLDLYYEMNVIQESIKSLNSSFINLKEIGTYEMYVKWPWYIWLLIVILFIIFLMILFFICCCTGCGSACFSKCHNCCDEYGGHNDFVIKASHDD.

An N-terminal signal peptide occupies residues 1-12; the sequence is MFLIIFILPTTL. Residues 13-1295 lie on the Extracellular side of the membrane; that stretch reads AVIGDFNCTN…GTYEMYVKWP (1283 aa). Positions 14–294 constitute a BetaCoV S1-NTD domain; that stretch reads VIGDFNCTNS…SFLSEIQCKT (281 aa). Residues Asn19, Asn29, Asn58, Asn114, Asn132, Asn171, Asn188, Asn192, and Asn251 are each glycosylated (N-linked (GlcNAc...) asparagine; by host). Cystine bridges form between Cys20/Cys156, Cys151/Cys183, and Cys163/Cys242. 2 disulfide bridges follow: Cys282/Cys292 and Cys327/Cys352. The BetaCoV S1-CTD domain maps to 325-605; sequence PDCDIDNWLN…GINSGTTCSN (281 aa). N-linked (GlcNAc...) asparagine; by host glycosylation is found at Asn335 and Asn355. Intrachain disulfides connect Cys370-Cys423 and Cys382-Cys603. N-linked (GlcNAc...) asparagine; by host glycans are attached at residues Asn433, Asn454, Asn561, Asn664, Asn684, Asn703, Asn725, Asn771, Asn776, and Asn793. Fusion peptide regions lie at residues 901 to 922 and 920 to 940; these read SLLE…VEAY and EAYN…VQSF. Asn924 carries N-linked (GlcNAc...) asparagine; by host glycosylation. Cys925 and Cys936 form a disulfide bridge. The tract at residues 1001–1051 is heptad repeat 1; that stretch reads QKLIANAFNKALLSIQNGFTATNSALAKIQSVVNANAQALNSLLQQLFNKF. Residues 1030–1074 adopt a coiled-coil conformation; it reads QSVVNANAQALNSLLQQLFNKFGAISSSLQEILSRLDNLEAQVQI. N-linked (GlcNAc...) asparagine; by host glycans are attached at residues Asn1181, Asn1211, Asn1221, Asn1226, Asn1240, Asn1247, Asn1255, and Asn1276. A heptad repeat 2 region spans residues 1245–1284; that stretch reads APNLTFNSHINATFLDLYYEMNVIQESIKSLNSSFINLKE. The stretch at 1257–1285 forms a coiled coil; sequence TFLDLYYEMNVIQESIKSLNSSFINLKEI. The chain crosses the membrane as a helical span at residues 1296–1316; sequence WYIWLLIVILFIIFLMILFFI. The Cytoplasmic segment spans residues 1317–1351; sequence CCCTGCGSACFSKCHNCCDEYGGHNDFVIKASHDD. A KxHxx motif is present at residues 1347 to 1351; the sequence is ASHDD.

Belongs to the betacoronaviruses spike protein family. As to quaternary structure, homotrimer; each monomer consists of a S1 and a S2 subunit. The resulting peplomers protrude from the virus surface as spikes. Specific enzymatic cleavages in vivo yield mature proteins. The precursor is processed into S1 and S2 by host cell furin or another cellular protease to yield the mature S1 and S2 proteins. Additionally, a second cleavage leads to the release of a fusion peptide after viral attachment to host cell receptor. In terms of processing, the cytoplasmic Cys-rich domain is palmitoylated. Spike glycoprotein is digested within host endosomes.

The protein resides in the virion membrane. The protein localises to the host endoplasmic reticulum-Golgi intermediate compartment membrane. It localises to the host cell membrane. Functionally, attaches the virion to the cell membrane by interacting with host receptor, initiating the infection. Mediates fusion of the virion and cellular membranes by acting as a class I viral fusion protein. Under the current model, the protein has at least three conformational states: pre-fusion native state, pre-hairpin intermediate state, and post-fusion hairpin state. During viral and target cell membrane fusion, the coiled coil regions (heptad repeats) assume a trimer-of-hairpins structure, positioning the fusion peptide in close proximity to the C-terminal region of the ectodomain. The formation of this structure appears to drive apposition and subsequent fusion of viral and target cell membranes. In terms of biological role, acts as a viral fusion peptide which is unmasked following S2 cleavage occurring upon virus endocytosis. This is Spike glycoprotein from Human coronavirus HKU1 (isolate N2) (HCoV-HKU1).